The chain runs to 121 residues: U15-barytoxin-Tl1a (121 aa).

An N-terminal signal peptide occupies residues 1–17 (MKLSVIVLVASFGFAVA). 4 cysteine pairs are disulfide-bonded: C56–C74, C67–C80, C71–C119, and C73–C90.

This sequence belongs to the neurotoxin 03 (Tx2) family. 03 subfamily. As to expression, expressed by the venom gland.

It localises to the secreted. In terms of biological role, ion channel inhibitor. The chain is U15-barytoxin-Tl1a from Trittame loki (Brush-footed trapdoor spider).